The following is a 259-amino-acid chain: Global transcriptional regulator CodY (259 aa).

The tract at residues 1-155 is GAF domain; the sequence is MNLLEKTRKI…GATVVGMEIL (155 aa). Positions 203 to 222 form a DNA-binding region, H-T-H motif; that stretch reads ASKIADRVGITRSVIVNALR. The residue at position 215 (S215) is a Phosphoserine.

This sequence belongs to the CodY family.

The protein localises to the cytoplasm. DNA-binding global transcriptional regulator which is involved in the adaptive response to starvation and acts by directly or indirectly controlling the expression of numerous genes in response to nutrient availability. During rapid exponential growth, CodY is highly active and represses genes whose products allow adaptation to nutrient depletion. The sequence is that of Global transcriptional regulator CodY from Geobacillus thermodenitrificans (strain NG80-2).